The chain runs to 345 residues: Methionine import ATP-binding protein MetN 4 (345 aa).

The ABC transporter domain occupies I2–V241. ATP is bound at residue G38–S45.

The protein belongs to the ABC transporter superfamily. Methionine importer (TC 3.A.1.24) family. In terms of assembly, the complex is composed of two ATP-binding proteins (MetN), two transmembrane proteins (MetI) and a solute-binding protein (MetQ).

It is found in the cell membrane. The enzyme catalyses L-methionine(out) + ATP + H2O = L-methionine(in) + ADP + phosphate + H(+). It catalyses the reaction D-methionine(out) + ATP + H2O = D-methionine(in) + ADP + phosphate + H(+). Part of the ABC transporter complex MetNIQ involved in methionine import. Responsible for energy coupling to the transport system. The polypeptide is Methionine import ATP-binding protein MetN 4 (Oceanobacillus iheyensis (strain DSM 14371 / CIP 107618 / JCM 11309 / KCTC 3954 / HTE831)).